A 196-amino-acid polypeptide reads, in one-letter code: Glycerol-3-phosphate acyltransferase (196 aa).

The next 5 helical transmembrane spans lie at 4–24 (LTLT…AILV), 56–76 (ATVL…AYFL), 80–100 (SLYL…PIFF), 114–134 (TLLP…VLVV), and 155–175 (VYFL…LILF).

Belongs to the PlsY family. As to quaternary structure, probably interacts with PlsX.

It localises to the cell inner membrane. It carries out the reaction an acyl phosphate + sn-glycerol 3-phosphate = a 1-acyl-sn-glycero-3-phosphate + phosphate. It participates in lipid metabolism; phospholipid metabolism. In terms of biological role, catalyzes the transfer of an acyl group from acyl-phosphate (acyl-PO(4)) to glycerol-3-phosphate (G3P) to form lysophosphatidic acid (LPA). This enzyme utilizes acyl-phosphate as fatty acyl donor, but not acyl-CoA or acyl-ACP. The polypeptide is Glycerol-3-phosphate acyltransferase (Colwellia psychrerythraea (strain 34H / ATCC BAA-681) (Vibrio psychroerythus)).